The following is a 77-amino-acid chain: Large ribosomal subunit protein uL29 (77 aa).

Belongs to the universal ribosomal protein uL29 family.

The sequence is that of Large ribosomal subunit protein uL29 from Mycolicibacterium gilvum (strain PYR-GCK) (Mycobacterium gilvum (strain PYR-GCK)).